A 359-amino-acid polypeptide reads, in one-letter code: Probable dual-specificity RNA methyltransferase RlmN (359 aa).

The active-site Proton acceptor is Glu91. Residues 97–329 (QHYGHSVCVT…KKNGVNCVVR (233 aa)) form the Radical SAM core domain. Cys104 and Cys340 are joined by a disulfide. The [4Fe-4S] cluster site is built by Cys111, Cys115, and Cys118. S-adenosyl-L-methionine is bound by residues 163-164 (GE), Ser195, 218-220 (SLH), and Asn296. The S-methylcysteine intermediate role is filled by Cys340.

It belongs to the radical SAM superfamily. RlmN family. The cofactor is [4Fe-4S] cluster.

The protein localises to the cytoplasm. It carries out the reaction adenosine(2503) in 23S rRNA + 2 reduced [2Fe-2S]-[ferredoxin] + 2 S-adenosyl-L-methionine = 2-methyladenosine(2503) in 23S rRNA + 5'-deoxyadenosine + L-methionine + 2 oxidized [2Fe-2S]-[ferredoxin] + S-adenosyl-L-homocysteine. The enzyme catalyses adenosine(37) in tRNA + 2 reduced [2Fe-2S]-[ferredoxin] + 2 S-adenosyl-L-methionine = 2-methyladenosine(37) in tRNA + 5'-deoxyadenosine + L-methionine + 2 oxidized [2Fe-2S]-[ferredoxin] + S-adenosyl-L-homocysteine. Specifically methylates position 2 of adenine 2503 in 23S rRNA and position 2 of adenine 37 in tRNAs. This chain is Probable dual-specificity RNA methyltransferase RlmN, found in Streptococcus pyogenes serotype M18 (strain MGAS8232).